The following is a 697-amino-acid chain: Hormonally up-regulated neu tumor-associated kinase homolog (697 aa).

One can recognise a Protein kinase domain in the interval 55–313 (YLIGRKLGEG…IQQALANRWL (259 aa)). Residues 61–69 (LGEGSFAKV) and Lys84 each bind ATP. Asp179 functions as the Proton acceptor in the catalytic mechanism. Basic and acidic residues-rich tracts occupy residues 405 to 424 (KMNKNSYEERRSKDLEKRGE) and 460 to 473 (PVKERRSSKSERES). Disordered regions lie at residues 405-480 (KMNK…LSPF) and 586-642 (DNTS…NCVR). Residues 586-600 (DNTSPIKGHSNQASF) are compositionally biased toward polar residues. The span at 607–626 (SPSSPESMSPTSPHSPHSPS) shows a compositional bias: low complexity. Residues 627-637 (CNNNISGNLGS) show a composition bias toward polar residues.

This sequence belongs to the protein kinase superfamily. CAMK Ser/Thr protein kinase family. SNF1 subfamily.

It carries out the reaction L-seryl-[protein] + ATP = O-phospho-L-seryl-[protein] + ADP + H(+). The enzyme catalyses L-threonyl-[protein] + ATP = O-phospho-L-threonyl-[protein] + ADP + H(+). The sequence is that of Hormonally up-regulated neu tumor-associated kinase homolog (hunk) from Xenopus tropicalis (Western clawed frog).